Consider the following 138-residue polypeptide: Large ribosomal subunit protein uL16 (138 aa).

Residues 1–21 are compositionally biased toward basic residues; the sequence is MLIPRKVKHRKQHHPSLRGRA. Residues 1–22 form a disordered region; that stretch reads MLIPRKVKHRKQHHPSLRGRAK.

Belongs to the universal ribosomal protein uL16 family. In terms of assembly, part of the 50S ribosomal subunit.

Its function is as follows. Binds 23S rRNA and is also seen to make contacts with the A and possibly P site tRNAs. In Thermobifida fusca (strain YX), this protein is Large ribosomal subunit protein uL16.